A 301-amino-acid polypeptide reads, in one-letter code: MTVIMDGKKLAELRLIETKNDLLALKDKYQITVKLVIILVGNNDASLIYVNNKVAKAKAIGMDSEIIRLFEFIEEKKLFSVIDDLNCDSTVHGIIVQLPLPPHIDALKLFARIDSRKDVDGLNPINIGYLNIGANQGLIPCTALGCIDLLQYYVTGLKGKHVVVIGKSNIVGKPLSALLLRNSCTVTICHSATVDLALHTRTADIVISAVGKANFLTDKHFSGNLAFIDVGISHIYDLQTHKRKLVGDGDFLKIKDLVKFITPVPGGVGPMTVAYLLKNTLTAAKLIYASIIDNDNEKRLC.

NADP(+) contacts are provided by residues 166–168, serine 191, and isoleucine 232; that span reads GKS.

The protein belongs to the tetrahydrofolate dehydrogenase/cyclohydrolase family. As to quaternary structure, homodimer.

The catalysed reaction is (6R)-5,10-methylene-5,6,7,8-tetrahydrofolate + NADP(+) = (6R)-5,10-methenyltetrahydrofolate + NADPH. The enzyme catalyses (6R)-5,10-methenyltetrahydrofolate + H2O = (6R)-10-formyltetrahydrofolate + H(+). The protein operates within one-carbon metabolism; tetrahydrofolate interconversion. In terms of biological role, catalyzes the oxidation of 5,10-methylenetetrahydrofolate to 5,10-methenyltetrahydrofolate and then the hydrolysis of 5,10-methenyltetrahydrofolate to 10-formyltetrahydrofolate. The protein is Bifunctional protein FolD of Orientia tsutsugamushi (strain Boryong) (Rickettsia tsutsugamushi).